The primary structure comprises 359 residues: UDP-3-O-acylglucosamine N-acyltransferase (359 aa).

H248 (proton acceptor) is an active-site residue.

The protein belongs to the transferase hexapeptide repeat family. LpxD subfamily. In terms of assembly, homotrimer.

The catalysed reaction is a UDP-3-O-[(3R)-3-hydroxyacyl]-alpha-D-glucosamine + a (3R)-hydroxyacyl-[ACP] = a UDP-2-N,3-O-bis[(3R)-3-hydroxyacyl]-alpha-D-glucosamine + holo-[ACP] + H(+). It participates in bacterial outer membrane biogenesis; LPS lipid A biosynthesis. Its function is as follows. Catalyzes the N-acylation of UDP-3-O-acylglucosamine using 3-hydroxyacyl-ACP as the acyl donor. Is involved in the biosynthesis of lipid A, a phosphorylated glycolipid that anchors the lipopolysaccharide to the outer membrane of the cell. The polypeptide is UDP-3-O-acylglucosamine N-acyltransferase (Chlamydia abortus (strain DSM 27085 / S26/3) (Chlamydophila abortus)).